The sequence spans 587 residues: Proteasome-associated ATPase (587 aa).

A coiled-coil region spans residues 9–94 (ARKAQHDAEI…KEEVDRLAQP (86 aa)). ATP is bound at residue 276–281 (GCGKTL). The segment at 586–587 (YL) is docks into pockets in the proteasome alpha-ring.

The protein belongs to the AAA ATPase family. Homohexamer. Assembles into a hexameric ring structure that caps the 20S proteasome core. Strongly interacts with the prokaryotic ubiquitin-like protein Pup through a hydrophobic interface; the interacting region of ARC lies in its N-terminal coiled-coil domain. There is one Pup binding site per ARC hexamer ring. Upon ATP-binding, the C-terminus of ARC interacts with the alpha-rings of the proteasome core, possibly by binding to the intersubunit pockets.

The protein operates within protein degradation; proteasomal Pup-dependent pathway. ATPase which is responsible for recognizing, binding, unfolding and translocation of pupylated proteins into the bacterial 20S proteasome core particle. May be essential for opening the gate of the 20S proteasome via an interaction with its C-terminus, thereby allowing substrate entry and access to the site of proteolysis. Thus, the C-termini of the proteasomal ATPase may function like a 'key in a lock' to induce gate opening and therefore regulate proteolysis. The sequence is that of Proteasome-associated ATPase from Thermomonospora curvata (strain ATCC 19995 / DSM 43183 / JCM 3096 / KCTC 9072 / NBRC 15933 / NCIMB 10081 / Henssen B9).